Here is a 375-residue protein sequence, read N- to C-terminus: GDP-mannose-dependent alpha-mannosyltransferase (375 aa).

Belongs to the glycosyltransferase group 1 family. Glycosyltransferase 4 subfamily.

It functions in the pathway phospholipid metabolism; phosphatidylinositol metabolism. Its function is as follows. Catalyzes the addition of a mannose residue from GDP-D-mannose to GlcAGroAc2 to generate 1,2-di-O-C16/C18:1-(alpha-D-mannopyranosyl)-(1-4)-(alpha-D-glucopyranosyluronic acid)-(1-3)-glycerol(ManGlcAGroAc2). In Mycolicibacterium smegmatis (strain ATCC 700084 / mc(2)155) (Mycobacterium smegmatis), this protein is GDP-mannose-dependent alpha-mannosyltransferase (mgtA).